Reading from the N-terminus, the 349-residue chain is Ureidoglycolate dehydrogenase (NAD(+)) (349 aa).

Residue histidine 116 is the Proton acceptor of the active site. Residues serine 140, 174–176 (DMA), lysine 224, and 306–308 (GQD) each bind NAD(+).

This sequence belongs to the LDH2/MDH2 oxidoreductase family. In terms of assembly, homodimer.

The protein localises to the cytoplasm. It carries out the reaction (S)-ureidoglycolate + NAD(+) = N-carbamoyl-2-oxoglycine + NADH + H(+). It participates in nitrogen metabolism; (S)-allantoin degradation; oxalurate from (S)-ureidoglycolate: step 1/1. Its function is as follows. AllD plays a pivotal role as a metabolic branch-point enzyme in nitrogen utilization via the assimilation of allantoin. It is able to utilize allantoin as a sole source of nitrogen under anaerobic conditions. Catalyzes the oxidation of ureidoglycolate to oxalurate. The protein is Ureidoglycolate dehydrogenase (NAD(+)) of Escherichia coli O157:H7.